A 644-amino-acid polypeptide reads, in one-letter code: Exoribonuclease 2 (644 aa).

The RNB domain maps to 189–516 (REDLTALDFV…NHRLLKAVIK (328 aa)). The 83-residue stretch at 561–643 (DTRFAAEIVD…ETRSIIARPV (83 aa)) folds into the S1 motif domain.

It belongs to the RNR ribonuclease family. RNase II subfamily.

The protein resides in the cytoplasm. It carries out the reaction Exonucleolytic cleavage in the 3'- to 5'-direction to yield nucleoside 5'-phosphates.. Functionally, involved in mRNA degradation. Hydrolyzes single-stranded polyribonucleotides processively in the 3' to 5' direction. This is Exoribonuclease 2 from Escherichia coli O139:H28 (strain E24377A / ETEC).